Consider the following 1106-residue polypeptide: Carbamoyl phosphate synthase large chain (1106 aa).

The segment at 1-402 (MPRRQDLNSV…ALQKAMRSLE (402 aa)) is carboxyphosphate synthetic domain. Positions 129, 169, 175, 176, 208, 210, 215, 241, 242, 243, 285, and 299 each coordinate ATP. The region spanning 133–328 (KGVVERCGAE…IAKIATKLSL (196 aa)) is the ATP-grasp 1 domain. Positions 285, 299, and 301 each coordinate Mg(2+). Residues Gln-285, Glu-299, and Asn-301 each contribute to the Mn(2+) site. Positions 403–550 (QKGSAFSFAR…YHYSSYDRET (148 aa)) are oligomerization domain. The interval 551–953 (EVAPHEKPSV…AFAKAQAAAG (403 aa)) is carbamoyl phosphate synthetic domain. Residues 681–872 (ARVLTEAGLR…MAKAAALIGT (192 aa)) form the ATP-grasp 2 domain. ATP is bound by residues Arg-717, Lys-756, Leu-758, Glu-763, Gly-788, Ile-789, His-790, Ser-791, Gln-831, and Glu-843. Residues Gln-831, Glu-843, and Asn-845 each coordinate Mg(2+). Residues Gln-831, Glu-843, and Asn-845 each contribute to the Mn(2+) site. The 153-residue stretch at 954–1106 (GPLPTSGSLF…ERAAQEASRD (153 aa)) folds into the MGS-like domain. The tract at residues 954-1106 (GPLPTSGSLF…ERAAQEASRD (153 aa)) is allosteric domain.

It belongs to the CarB family. As to quaternary structure, composed of two chains; the small (or glutamine) chain promotes the hydrolysis of glutamine to ammonia, which is used by the large (or ammonia) chain to synthesize carbamoyl phosphate. Tetramer of heterodimers (alpha,beta)4. It depends on Mg(2+) as a cofactor. The cofactor is Mn(2+).

The enzyme catalyses hydrogencarbonate + L-glutamine + 2 ATP + H2O = carbamoyl phosphate + L-glutamate + 2 ADP + phosphate + 2 H(+). It carries out the reaction hydrogencarbonate + NH4(+) + 2 ATP = carbamoyl phosphate + 2 ADP + phosphate + 2 H(+). It participates in amino-acid biosynthesis; L-arginine biosynthesis; carbamoyl phosphate from bicarbonate: step 1/1. Its pathway is pyrimidine metabolism; UMP biosynthesis via de novo pathway; (S)-dihydroorotate from bicarbonate: step 1/3. Functionally, large subunit of the glutamine-dependent carbamoyl phosphate synthetase (CPSase). CPSase catalyzes the formation of carbamoyl phosphate from the ammonia moiety of glutamine, carbonate, and phosphate donated by ATP, constituting the first step of 2 biosynthetic pathways, one leading to arginine and/or urea and the other to pyrimidine nucleotides. The large subunit (synthetase) binds the substrates ammonia (free or transferred from glutamine from the small subunit), hydrogencarbonate and ATP and carries out an ATP-coupled ligase reaction, activating hydrogencarbonate by forming carboxy phosphate which reacts with ammonia to form carbamoyl phosphate. The polypeptide is Carbamoyl phosphate synthase large chain (Kocuria rhizophila (strain ATCC 9341 / DSM 348 / NBRC 103217 / DC2201)).